The following is a 284-amino-acid chain: MLSKQIPLGIYEKALPAGECWLERLQLAKTLGFDFVEMSVDETDDRLSRLDWSREQRLALVNAIVETGVRVPSMCLSAHRRFPLGSEDDAVRAQGLEIMRKAIQFAQDVGIRVIQLAGYDVYYQEANNETRRRFRDGLKESVEMASRAQVTLAMEIMDYPLMNSISKALGYTHYLNNPWFQLYPDIGNLSAWDNDVQMELQAGIGHIVAVHVKDTKPGVFKNVPFGEGVVDFERCFETLKQSGYCGPYLIEMWSETAEDPAAEVAKARDWVKARMAKAGMVEAA.

The protein belongs to the L-ribulose-5-phosphate 3-epimerase family.

The enzyme catalyses L-ribulose 5-phosphate = L-xylulose 5-phosphate. It functions in the pathway cofactor degradation; L-ascorbate degradation; D-xylulose 5-phosphate from L-ascorbate: step 3/4. Functionally, catalyzes the isomerization of L-xylulose-5-phosphate to L-ribulose-5-phosphate. Is involved in the anaerobic L-ascorbate utilization. The chain is L-ribulose-5-phosphate 3-epimerase UlaE from Escherichia coli O17:K52:H18 (strain UMN026 / ExPEC).